A 73-amino-acid polypeptide reads, in one-letter code: Ubiquitin-like protein 5 (73 aa).

The 73-residue stretch at 1–73 folds into the Ubiquitin-like domain; the sequence is MIEVVCNDRL…DGMNLELYYL (73 aa).

It localises to the cytoplasm. The sequence is that of Ubiquitin-like protein 5 (ubl5) from Danio rerio (Zebrafish).